The sequence spans 754 residues: Disintegrin and metalloproteinase domain-containing protein 7 (754 aa).

The N-terminal stretch at 1–18 (MLPGCIFLMILLIPQVKE) is a signal peptide. Positions 19–176 (KFILGVEGQQ…NYSCTELNFT (158 aa)) are excised as a propeptide. Over 19–668 (KFILGVEGQQ…ACEETLHVTN (650 aa)) the chain is Extracellular. N-linked (GlcNAc...) asparagine glycosylation is found at asparagine 84, asparagine 167, asparagine 174, and asparagine 184. The region spanning 199–394 (KYVELFIVAD…YKPTCMLNIP (196 aa)) is the Peptidase M12B domain. Intrachain disulfides connect cysteine 310–cysteine 389, cysteine 350–cysteine 373, cysteine 352–cysteine 357, and cysteine 460–cysteine 480. Positions 402-488 (FQFCGNKKLD…ACPKDQFRVN (87 aa)) constitute a Disintegrin domain. Asparagine 584 and asparagine 668 each carry an N-linked (GlcNAc...) asparagine glycan. The helical transmembrane segment at 669–689 (ITILVVVLVLVIVGIGVLILL) threads the bilayer. At 690-754 (VRYRKCIKLK…GIADPNQSAK (65 aa)) the chain is on the cytoplasmic side.

Interacts with ITM2B in sperm; the interaction increases following capacitation. Interacts with HSPA5 and CANX.

The protein resides in the membrane. Required for normal male fertility via maintenance of epithelial cell morphology in the caput epididymis and subsequently correct epididymis lumen structure required for sperm development. Plays a role in sperm motility, flagella morphology and tyrosine phosphorylation during sperm capacitance. Plays a role in normal expression levels of HSPA5, ITM2B and ADAM2 in sperm both prior to and post-capacitation. This is a non catalytic metalloprotease-like protein. The chain is Disintegrin and metalloproteinase domain-containing protein 7 from Homo sapiens (Human).